A 442-amino-acid chain; its full sequence is MSEIGSYHDTIFALSSGRLPSGVAVIRISGPKTRFVYETICQAIPEPRHAALLTFRSRNGDAIDRGLILFFPAPHSFTGEDCAEFHLHGGKAVVEKMLAVLGELPGCRIAEAGEFTRRAFANGKMDLTIAEGLADLIAAETEGQRRLAMQVASGNQRKLYSEWRQRLINARAFIEAELDFADESDVPGSVSMQVWQQLSALKHEIEHHIASGKRAAMLRDGLHVVIVGAPNAGKSSLLNFLAGRDVAIISKEAGTTRDLLEVKLDLGGIPVYVTDTAGLRETDSVVEKIGIERARARMAEADLVLSLEDMSGPVSVTVEKIEAETWLIGTKADLGGSASGLWKYHISTMTGSGLEQLLDALQAFAEAKIGQIEDAVPTRQRHINLLRATIEEIEKAIEGDDLPLELRAENMRLASQFLGRITGDVDVEEILDVIFSQFCIGK.

(6S)-5-formyl-5,6,7,8-tetrahydrofolate is bound by residues Arg-27, Glu-84, and Lys-124. The 146-residue stretch at 221–366 folds into the TrmE-type G domain; it reads GLHVVIVGAP…LLDALQAFAE (146 aa). GTP contacts are provided by residues 231–236, 250–256, and 275–278; these read NAGKSS, SKEAGTT, and DTAG. Residues Ser-235 and Thr-256 each contribute to the Mg(2+) site. Lys-442 is a binding site for (6S)-5-formyl-5,6,7,8-tetrahydrofolate.

The protein belongs to the TRAFAC class TrmE-Era-EngA-EngB-Septin-like GTPase superfamily. TrmE GTPase family. In terms of assembly, homodimer. Heterotetramer of two MnmE and two MnmG subunits. K(+) is required as a cofactor.

It localises to the cytoplasm. In terms of biological role, exhibits a very high intrinsic GTPase hydrolysis rate. Involved in the addition of a carboxymethylaminomethyl (cmnm) group at the wobble position (U34) of certain tRNAs, forming tRNA-cmnm(5)s(2)U34. The polypeptide is tRNA modification GTPase MnmE (Brucella canis (strain ATCC 23365 / NCTC 10854 / RM-666)).